The following is a 779-amino-acid chain: Mediator of RNA polymerase II transcription subunit 15 (779 aa).

Composition is skewed to polar residues over residues 70 to 90 and 98 to 108; these read NKNQQNPAGGSQDGGNPNQQG and ALQTLATQGTR. Disordered regions lie at residues 70–131, 209–407, 437–512, and 629–649; these read NKNQ…GGNA, NPMQ…VPIG, FLRQ…NPQE, and PAKQPRLAIDEPSTSGSTGSQ. The segment covering 114–130 has biased composition (gly residues); that stretch reads GQMGPGGPMGNQMGGGN. Composition is skewed to low complexity over residues 209 to 232 and 240 to 270; these read NPMQMGVSGMPQGAGQQQPQQPQG and PNQMNPMGGMGMQVNPGGHMNQNAINQQMNQ. Residues 274-284 are compositionally biased toward gly residues; the sequence is SSGGNQMGNLG. Low complexity-rich tracts occupy residues 285-295, 304-329, and 339-350; these read GNSPMNPGNMG, QQMPPGMNPNQQQLGMAGGQMNQMNQ, and GPVQQQQQPGQV. Positions 351-361 are enriched in gly residues; sequence GMAGMGPGGPG. 3 stretches are compositionally biased toward low complexity: residues 362 to 383, 393 to 402, and 451 to 468; these read NLQQQNNPQQQSQGGPNAAPGQ, NMQAMGNQGN, and GPGSIGPQSHPGQMIPSP. Polar residues-rich tracts occupy residues 477–500 and 640–649; these read QVSSNIPAPRNIGQSPGQSLNTPG and PSTSGSTGSQ.

It belongs to the Mediator complex subunit 15 family. Component of the Mediator complex.

It localises to the nucleus. Functionally, component of the Mediator complex, a coactivator involved in the regulated transcription of nearly all RNA polymerase II-dependent genes. Mediator functions as a bridge to convey information from gene-specific regulatory proteins to the basal RNA polymerase II transcription machinery. Mediator is recruited to promoters by direct interactions with regulatory proteins and serves as a scaffold for the assembly of a functional preinitiation complex with RNA polymerase II and the general transcription factors. In Aedes aegypti (Yellowfever mosquito), this protein is Mediator of RNA polymerase II transcription subunit 15 (MED15).